Reading from the N-terminus, the 217-residue chain is Peroxiredoxin (217 aa).

Positions 2 to 159 (PVIGEKFPEV…IVRLVKALQV (158 aa)) constitute a Thioredoxin domain. Residue Cys46 is the Cysteine sulfenic acid (-SOH) intermediate of the active site. Arg122 provides a ligand contact to substrate. Cys206 and Cys212 are disulfide-bonded.

This sequence belongs to the peroxiredoxin family. Prx6 subfamily. In terms of assembly, homodecamer. Pentamer of dimers that assemble into a ring structure.

It localises to the cytoplasm. It catalyses the reaction a hydroperoxide + [thioredoxin]-dithiol = an alcohol + [thioredoxin]-disulfide + H2O. In terms of biological role, thiol-specific peroxidase that catalyzes the reduction of hydrogen peroxide and organic hydroperoxides to water and alcohols, respectively. Plays a role in cell protection against oxidative stress by detoxifying peroxides. The protein is Peroxiredoxin of Methanocaldococcus jannaschii (strain ATCC 43067 / DSM 2661 / JAL-1 / JCM 10045 / NBRC 100440) (Methanococcus jannaschii).